Here is a 380-residue protein sequence, read N- to C-terminus: Guanine nucleotide-binding protein subunit beta (380 aa).

WD repeat units lie at residues 64-94 (GHSG…IVWN), 106-136 (LHCP…SIFN), 155-186 (GHKG…VLWD), 203-234 (GHTA…RLWD), 247-277 (GHEG…RLFD), 296-326 (NELP…YVWD), and 342-372 (SHEG…KIWA).

The protein belongs to the WD repeat G protein beta family. As to quaternary structure, g proteins are composed of 3 units, alpha, beta and gamma. Interacts with the gamma subunits RGG1 and RGG2.

The protein localises to the cell membrane. Functionally, guanine nucleotide-binding proteins (G proteins) are involved as modulators or transducers in various transmembrane signaling systems. The beta and gamma chains are required for the GTPase activity, for replacement of GDP by GTP, and for G protein-effector interaction. The sequence is that of Guanine nucleotide-binding protein subunit beta from Oryza sativa subsp. japonica (Rice).